Here is a 190-residue protein sequence, read N- to C-terminus: Recombination protein RecR (190 aa).

The segment at 58-73 adopts a C4-type zinc-finger fold; it reads CEQCGALSENELCEIC. The Toprim domain maps to 81–167; that stretch reads NILCIVESPK…TFSKIAQGIP (87 aa).

It belongs to the RecR family.

May play a role in DNA repair. It seems to be involved in an RecBC-independent recombinational process of DNA repair. It may act with RecF and RecO. In Campylobacter jejuni subsp. jejuni serotype O:23/36 (strain 81-176), this protein is Recombination protein RecR.